The following is a 342-amino-acid chain: DDB1- and CUL4-associated factor 7 (342 aa).

WD repeat units lie at residues 6 to 52 (KRKE…LVGL), 60 to 100 (ICRN…VWRV), 108 to 150 (ECLL…IWGL), 165 to 206 (HVKT…MFDL), 213 to 252 (TIIYEDPQHHPLLRLCWNKQDPNYLATMAMDGMEVVILDV), 257 to 296 (TPVARLNNHRACVNGIAWAPHSSCHICTAADDHQALIWDI), and 303 to 342 (IEDPILAYTAEGEINNVQWASTQPDWIAICYNNCLEILRV).

This sequence belongs to the WD repeat DCAF7 family. In terms of assembly, interacts with DYRK1A, DYRK1B and DIAPH1. Interacts with DDB1. Interacts with ZNF703. Interacts with human adenovirus 5 E1A protein.

Its subcellular location is the cytoplasm. The protein localises to the nucleus. The protein operates within protein modification; protein ubiquitination. In terms of biological role, involved in craniofacial development. Acts upstream of the EDN1 pathway and is required for formation of the upper jaw equivalent, the palatoquadrate. The activity required for EDN1 pathway function differs between the first and second arches. Associates with DIAPH1 and controls GLI1 transcriptional activity. Could be involved in normal and disease skin development. May function as a substrate receptor for CUL4-DDB1 E3 ubiquitin-protein ligase complex. The protein is DDB1- and CUL4-associated factor 7 (DCAF7) of Homo sapiens (Human).